A 542-amino-acid chain; its full sequence is Organic anion transporter 3 (542 aa).

At 1-9 (MTFSEILDR) the chain is on the cytoplasmic side. Phosphoserine is present on Ser4. The helical transmembrane segment at 10–30 (VGSMGPFQFLHVALLGFPILG) threads the bilayer. Residues 31–123 (MANHNLLQIF…LVCSSNKLKE (93 aa)) lie on the Extracellular side of the membrane. N-linked (GlcNAc...) asparagine glycosylation occurs at Asn86. The chain crosses the membrane as a helical span at residues 124 to 144 (MAQSIFMAGILIGGLVLGDLS). The Cytoplasmic segment spans residues 145–150 (DRFGRK). Residues 151–171 (PILTCCYLLLAASGSSTAFSP) form a helical membrane-spanning segment. Residues 172 to 176 (TLPIY) are Extracellular-facing. A helical transmembrane segment spans residues 177-197 (MVFRFLCGFSISGISLSTVIL). Residues 198–212 (NVEWVPTKMRAITST) are Cytoplasmic-facing. A helical transmembrane segment spans residues 213–233 (AIGYCYTIGQFILPGLAYAIP). Topologically, residues 234–236 (QWR) are extracellular. Residues 237–257 (WLQLTVSVPYFIFSLLSWWIP) form a helical membrane-spanning segment. Over 258-327 (ESIRWLVLAG…FRTPILRRVT (70 aa)) the chain is Cytoplasmic. The chain crosses the membrane as a helical span at residues 328 to 348 (LCLSLAWFATGFAYYSLAMGV). At 349-354 (EEFGVN) the chain is on the extracellular side. The helical transmembrane segment at 355 to 375 (IYILQIIFGGVDIPAKFITIL) threads the bilayer. Residues 376 to 389 (SLSYLGRHITQGAA) lie on the Cytoplasmic side of the membrane. Residues 390-410 (LILAGAAILSLIFVPMDMSLL) form a helical membrane-spanning segment. Residue Arg411 is a topological domain, extracellular. Residues 412 to 432 (TILAVFGKGCLSGSFSCLFLY) form a helical membrane-spanning segment. The Cytoplasmic segment spans residues 433–471 (TSELFPTVIRQTGMGISNVWARVGSMISPLVKITGEIQP). Residues 472-492 (FIPNIIYGTVALLGGSAALFL) traverse the membrane as a helical segment. Residues 493–542 (PETLNQPLPETLEDMENWFLQSKKLKQEPEAEKASQRIPLQPSGPGVDRS) are Extracellular-facing. The segment covering 518-527 (KQEPEAEKAS) has biased composition (basic and acidic residues). A disordered region spans residues 518-542 (KQEPEAEKASQRIPLQPSGPGVDRS).

The protein belongs to the major facilitator (TC 2.A.1) superfamily. Organic cation transporter (TC 2.A.1.19) family.

It localises to the basolateral cell membrane. It catalyses the reaction estrone 3-sulfate(out) + glutarate(in) = estrone 3-sulfate(in) + glutarate(out). The catalysed reaction is estrone 3-sulfate(in) + 2-oxoglutarate(out) = estrone 3-sulfate(out) + 2-oxoglutarate(in). It carries out the reaction glutarate(in) + 2-oxoglutarate(out) = glutarate(out) + 2-oxoglutarate(in). The enzyme catalyses urate(in) + 2-oxoglutarate(out) = urate(out) + 2-oxoglutarate(in). It catalyses the reaction taurocholate(out) + glutarate(in) = taurocholate(in) + glutarate(out). The catalysed reaction is dehydroepiandrosterone 3-sulfate(out) + glutarate(in) = dehydroepiandrosterone 3-sulfate(in) + glutarate(out). It carries out the reaction prostaglandin F2alpha(out) + glutarate(in) = prostaglandin F2alpha(in) + glutarate(out). The enzyme catalyses prostaglandin F2alpha(out) + 2-oxoglutarate(in) = prostaglandin F2alpha(in) + 2-oxoglutarate(out). It catalyses the reaction (R)-carnitine(out) + 2-oxoglutarate(in) = (R)-carnitine(in) + 2-oxoglutarate(out). The catalysed reaction is glutarate(in) + (R)-carnitine(out) = glutarate(out) + (R)-carnitine(in). It carries out the reaction prostaglandin E2(out) + 2-oxoglutarate(in) = prostaglandin E2(in) + 2-oxoglutarate(out). The enzyme catalyses prostaglandin E2(out) + glutarate(in) = prostaglandin E2(in) + glutarate(out). It catalyses the reaction urate(in) + glutarate(out) = urate(out) + glutarate(in). The catalysed reaction is taurocholate(out) + 2-oxoglutarate(in) = taurocholate(in) + 2-oxoglutarate(out). It carries out the reaction dehydroepiandrosterone 3-sulfate(out) + 2-oxoglutarate(in) = dehydroepiandrosterone 3-sulfate(in) + 2-oxoglutarate(out). The enzyme catalyses kynurenate(out) + a dicarboxylate(in) = kynurenate(in) + a dicarboxylate(out). It catalyses the reaction (indol-3-yl)acetate(out) + a dicarboxylate(in) = (indol-3-yl)acetate(in) + a dicarboxylate(out). The catalysed reaction is indoxyl sulfate(out) + a dicarboxylate(in) = indoxyl sulfate(in) + a dicarboxylate(out). It carries out the reaction N-benzoylglycine(out) + a dicarboxylate(in) = N-benzoylglycine(in) + a dicarboxylate(out). The enzyme catalyses 3-carboxy-4-methyl-5-propyl-2-furanpropanoate(out) + a dicarboxylate(in) = 3-carboxy-4-methyl-5-propyl-2-furanpropanoate(in) + a dicarboxylate(out). It catalyses the reaction (6R)-L-erythro-5,6,7,8-tetrahydrobiopterin(out) + a dicarboxylate(in) = (6R)-L-erythro-5,6,7,8-tetrahydrobiopterin(in) + a dicarboxylate(out). The catalysed reaction is L-erythro-7,8-dihydrobiopterin(out) + a dicarboxylate(in) = L-erythro-7,8-dihydrobiopterin(in) + a dicarboxylate(out). It carries out the reaction L-sepiapterin(out) + a dicarboxylate(in) = L-sepiapterin(in) + a dicarboxylate(out). In terms of biological role, functions as an organic anion/dicarboxylate exchanger that couples organic anion uptake indirectly to the sodium gradient. Transports organic anions such as estrone 3-sulfate (E1S) and urate in exchange for dicarboxylates such as glutarate or ketoglutarate (2-oxoglutarate). Plays an important role in the excretion of endogenous and exogenous organic anions, especially from the kidney and the brain. E1S transport is pH- and chloride-dependent and may also involve E1S/cGMP exchange. Responsible for the transport of prostaglandin E2 (PGE2) and prostaglandin F2(alpha) (PGF2(alpha)) in the basolateral side of the renal tubule. Involved in the transport of neuroactive tryptophan metabolites kynurenate and xanthurenate. Functions as a biopterin transporters involved in the uptake and the secretion of coenzymes tetrahydrobiopterin (BH4), dihydrobiopterin (BH2) and sepiapterin to urine, thereby determining baseline levels of blood biopterins. May be involved in the basolateral transport of steviol, a metabolite of the popular sugar substitute stevioside. May participate in the detoxification/ renal excretion of drugs and xenobiotics, such as the histamine H(2)-receptor antagonists fexofenadine and cimetidine, the antibiotic benzylpenicillin (PCG), the anionic herbicide 2,4-dichloro-phenoxyacetate (2,4-D), the diagnostic agent p-aminohippurate (PAH), the antiviral acyclovir (ACV), and the mycotoxin ochratoxin (OTA), by transporting these exogenous organic anions across the cell membrane in exchange for dicarboxylates such as 2-oxoglutarate. Contributes to the renal uptake of potent uremic toxins (indoxyl sulfate (IS), indole acetate (IA), hippurate/N-benzoylglycine (HA) and 3-carboxy-4-methyl-5-propyl-2-furanpropionate (CMPF)), pravastatin, PCG, E1S and dehydroepiandrosterone sulfate (DHEAS), and is partly involved in the renal uptake of temocaprilat (an angiotensin-converting enzyme (ACE) inhibitor). May contribute to the release of cortisol in the adrenals. Involved in one of the detoxification systems on the choroid plexus (CP), removes substrates such as E1S or taurocholate (TC), PCG, 2,4-D and PAH, from the cerebrospinal fluid (CSF) to the blood for eventual excretion in urine and bile. Also contributes to the uptake of several other organic compounds such as the prostanoids prostaglandin E(2) and prostaglandin F(2-alpha), L-carnitine, and the therapeutic drugs allopurinol, 6-mercaptopurine (6-MP) and 5-fluorouracil (5-FU). Mediates the transport of PAH, PCG, and the statins pravastatin and pitavastatin, from the cerebrum into the blood circulation across the blood-brain barrier (BBB). In summary, plays a role in the efflux of drugs and xenobiotics, helping reduce their undesired toxicological effects on the body. This is Organic anion transporter 3 (SLC22A8) from Oryctolagus cuniculus (Rabbit).